The primary structure comprises 346 residues: MLVLGIESSCDETGLALYDTQRGLLAHALHSQIAMHRDYGGVVPELASRDHIRRALPLLEEVMAQSGTRRDDIDAIAFTQGPGLAGALLVGASIANALALAWNKPTVGIHHLEGHLLSPLLVDEPPPFPFVALLVSGGHTQLMRVTDVGVYETLGETLDDAAGEAFDKTAKLIGLGYPGGPEVSKLAETGTPGAVVLPRPMLHSGDLDFSFSGLKTAVLTQMKKFEAAKLDGEALERAKADLARGFVDAAVDVLVAKSLAALKKTKLKRLVVAGGVGANRQLRAALSAAAAKRGFDVHYPDLALCTDNGAMIALAGALRLGRWPEQANADYAFTVKPRWDLASLAG.

Fe cation contacts are provided by histidine 111 and histidine 115. Substrate contacts are provided by residues leucine 134 to glycine 138, aspartate 167, glycine 180, and asparagine 279. Residue aspartate 307 coordinates Fe cation.

This sequence belongs to the KAE1 / TsaD family. The cofactor is Fe(2+).

It localises to the cytoplasm. The enzyme catalyses L-threonylcarbamoyladenylate + adenosine(37) in tRNA = N(6)-L-threonylcarbamoyladenosine(37) in tRNA + AMP + H(+). Functionally, required for the formation of a threonylcarbamoyl group on adenosine at position 37 (t(6)A37) in tRNAs that read codons beginning with adenine. Is involved in the transfer of the threonylcarbamoyl moiety of threonylcarbamoyl-AMP (TC-AMP) to the N6 group of A37, together with TsaE and TsaB. TsaD likely plays a direct catalytic role in this reaction. The chain is tRNA N6-adenosine threonylcarbamoyltransferase from Burkholderia cenocepacia (strain HI2424).